Here is a 212-residue protein sequence, read N- to C-terminus: Fibrillarin-like rRNA/tRNA 2'-O-methyltransferase (212 aa).

The interval 1-37 is disordered; that stretch reads MSEPNLPAGVERREIGGETRLATRGPPVYGEPTADGW. S-adenosyl-L-methionine-binding positions include 74–75, 90–91, 115–116, and 136–139; these read TT, EF, DA, and DVAT.

The protein belongs to the methyltransferase superfamily. Fibrillarin family. As to quaternary structure, interacts with nop5. Component of box C/D small ribonucleoprotein (sRNP) particles that contain rpl7ae, FlpA and nop5, plus a guide RNA.

Its function is as follows. Involved in pre-rRNA and tRNA processing. Utilizes the methyl donor S-adenosyl-L-methionine to catalyze the site-specific 2'-hydroxyl methylation of ribose moieties in rRNA and tRNA. Site specificity is provided by a guide RNA that base pairs with the substrate. Methylation occurs at a characteristic distance from the sequence involved in base pairing with the guide RNA. The polypeptide is Fibrillarin-like rRNA/tRNA 2'-O-methyltransferase (Halorubrum lacusprofundi (strain ATCC 49239 / DSM 5036 / JCM 8891 / ACAM 34)).